The primary structure comprises 364 residues: Ribosomal RNA large subunit methyltransferase F (364 aa).

Positions 1–30 (MTNKRKSAKPLEPAKRAPKPRTKKSRDLSA) are disordered.

The protein belongs to the methyltransferase superfamily. METTL16/RlmF family.

The protein resides in the cytoplasm. The catalysed reaction is adenosine(1618) in 23S rRNA + S-adenosyl-L-methionine = N(6)-methyladenosine(1618) in 23S rRNA + S-adenosyl-L-homocysteine + H(+). Functionally, specifically methylates the adenine in position 1618 of 23S rRNA. The polypeptide is Ribosomal RNA large subunit methyltransferase F (Vibrio vulnificus (strain CMCP6)).